The primary structure comprises 363 residues: Bonnadiene synthase (363 aa).

Asp-93, Asp-98, Asn-234, Ser-238, and Glu-242 together coordinate Mg(2+).

This sequence belongs to the terpene synthase family. The cofactor is Mg(2+).

The enzyme catalyses (2E,6E,10E)-geranylgeranyl diphosphate = bonnadiene + diphosphate. Its pathway is secondary metabolite biosynthesis; terpenoid biosynthesis. Diterpene synthase that catalyzes the conversion of geranylgeranyl diphosphate (GGPP) to bonnadiene. Cannot use geranyl diphosphate (GPP), farnesyl diphosphate (FPP) and geranylfarnesyl diphosphate (GFPP). The polypeptide is Bonnadiene synthase (Allokutzneria albata (Kibdelosporangium albatum)).